The chain runs to 387 residues: Homoserine O-succinyltransferase (387 aa).

Positions 45–354 constitute an AB hydrolase-1 domain; it reads NAVLVCHALN…DAPHGHDAFL (310 aa). S151 acts as the Nucleophile in catalysis. A substrate-binding site is contributed by R221. Active-site residues include D317 and H350. D351 serves as a coordination point for substrate.

Belongs to the AB hydrolase superfamily. MetX family. Homodimer.

The protein resides in the cytoplasm. The catalysed reaction is L-homoserine + succinyl-CoA = O-succinyl-L-homoserine + CoA. Its pathway is amino-acid biosynthesis; L-methionine biosynthesis via de novo pathway; O-succinyl-L-homoserine from L-homoserine: step 1/1. Its function is as follows. Transfers a succinyl group from succinyl-CoA to L-homoserine, forming succinyl-L-homoserine. The protein is Homoserine O-succinyltransferase of Methylibium petroleiphilum (strain ATCC BAA-1232 / LMG 22953 / PM1).